Reading from the N-terminus, the 105-residue chain is Heat shock protein HspQ (105 aa).

It belongs to the HspQ family.

The protein localises to the cytoplasm. Functionally, involved in the degradation of certain denaturated proteins, including DnaA, during heat shock stress. The protein is Heat shock protein HspQ of Blochmanniella floridana.